A 428-amino-acid chain; its full sequence is tRNA modification GTPase MnmE (428 aa).

Arginine 20, glutamate 77, and lysine 117 together coordinate (6S)-5-formyl-5,6,7,8-tetrahydrofolate. One can recognise a TrmE-type G domain in the interval 213–351 (GFEVAIIGPP…LVQRISDVLK (139 aa)). Position 223 (asparagine 223) interacts with K(+). GTP-binding positions include 223 to 228 (NAGKST), 242 to 248 (SEVAGTT), and 267 to 270 (DTAG). Serine 227 lines the Mg(2+) pocket. Residues serine 242, valine 244, and threonine 247 each coordinate K(+). Threonine 248 is a Mg(2+) binding site. Residue lysine 428 coordinates (6S)-5-formyl-5,6,7,8-tetrahydrofolate.

It belongs to the TRAFAC class TrmE-Era-EngA-EngB-Septin-like GTPase superfamily. TrmE GTPase family. Homodimer. Heterotetramer of two MnmE and two MnmG subunits. The cofactor is K(+).

It localises to the cytoplasm. Its function is as follows. Exhibits a very high intrinsic GTPase hydrolysis rate. Involved in the addition of a carboxymethylaminomethyl (cmnm) group at the wobble position (U34) of certain tRNAs, forming tRNA-cmnm(5)s(2)U34. This is tRNA modification GTPase MnmE from Ruegeria pomeroyi (strain ATCC 700808 / DSM 15171 / DSS-3) (Silicibacter pomeroyi).